Reading from the N-terminus, the 140-residue chain is Endoribonuclease YbeY (140 aa).

Zn(2+) contacts are provided by H100, H104, and H110.

It belongs to the endoribonuclease YbeY family. The cofactor is Zn(2+).

It localises to the cytoplasm. Its function is as follows. Single strand-specific metallo-endoribonuclease involved in late-stage 70S ribosome quality control and in maturation of the 3' terminus of the 16S rRNA. The sequence is that of Endoribonuclease YbeY from Helicobacter pylori (strain Shi470).